Consider the following 310-residue polypeptide: DDRGK domain-containing protein 1 (310 aa).

A helical membrane pass occupies residues 1–21 (MAAIIYLAIAAVASILLFVAV). Topologically, residues 22–310 (KLLSTDTKTE…DSPAEISVNA (289 aa)) are cytoplasmic. 2 disordered regions span residues 38–85 (VGEL…DEYQ) and 110–162 (KAEK…LKEE). Positions 52-70 (PRARARRGLRNKTNRSKTQ) are enriched in basic residues. A compositionally biased stretch (acidic residues) spans 76–85 (DYDDYDDEYQ).

The protein belongs to the DDRGK1 family.

The protein resides in the endoplasmic reticulum membrane. Substrate adapter for ufmylation, the covalent attachment of the ubiquitin-like modifier UFM1 to substrate proteins. This Trichoplax adhaerens (Trichoplax reptans) protein is DDRGK domain-containing protein 1.